Reading from the N-terminus, the 612-residue chain is MSKVIGIDLGTTNSCVAVLEGGEPTVIANAEGNRTTPSVVAFKNGERQVGEVAKRQSITNPNTIMSVKRHMGTDYKVEIEGKDYTPQEVSAIILQHLKAYAESYLGETVSKAVITVPAYFNDAERQATKDAGKIAGLEVERIINEPTAAALAYGLDKTDEDQTILVYDLGGGTFDVSVLELGDGVFEVRSTAGDNRLGGDDFDQVIIDHLVAEFKKENGIDLSKDKMALQRLKDAAEKAKKDLSGVSSTQISLPFITAGEAGPLHLELTLTRAKFEELSAHLVERTMAPVRQALQDADLSASEIDKVILVGGSTRIPAVQEAIKKETGKEAHKGVNPDEVVALGAAIQGGVITGDVKDVVLLDVTPLSLGIETMGGVFTKLIDRNTTIPTSKSQVFSTAADNQTAVDIHVLQGERPMSADNKTLGRFQLTDIPPAPRGVPQIEVSFDIDKNGIVNVRAKDLGTGKEQNITIKSSSGLSDDEIERMVKEAEENADADAKRKEEIEVRNEADQLVFQTEKTLKDLEGKVDEEQVKKANDAKDALKAAIEKNEIEDIKAKKDELQTIVQELSMKLYEEAAKAQQAEGGANAEGKKADDNVVDAEYEEVKDDETKK.

Phosphothreonine; by autocatalysis is present on T173. The interval 576–612 (AAKAQQAEGGANAEGKKADDNVVDAEYEEVKDDETKK) is disordered. Low complexity predominate over residues 578–588 (KAQQAEGGANA). A compositionally biased stretch (acidic residues) spans 596–612 (NVVDAEYEEVKDDETKK).

This sequence belongs to the heat shock protein 70 family.

Functionally, acts as a chaperone. In Bacillus velezensis (strain DSM 23117 / BGSC 10A6 / LMG 26770 / FZB42) (Bacillus amyloliquefaciens subsp. plantarum), this protein is Chaperone protein DnaK.